Reading from the N-terminus, the 486-residue chain is Na(+)/H(+) antiporter NhaA 2 (486 aa).

11 consecutive transmembrane segments (helical) span residues 58-78 (GGLL…TAPG), 102-122 (LTDW…GLEL), 138-158 (ALPV…CLAL), 168-188 (AWAI…SLAG), 198-218 (VLLG…ALGL), 220-240 (HGIN…TALA), 260-280 (ISLH…GLLV), 300-320 (LGPI…TGVS), 338-358 (VAVG…WLAV), 374-394 (LVPL…ITRL), and 404-424 (GAST…LTAL). The tract at residues 432–486 (GAPATRGSSRPATQVGGVAGPIPQTRRESDGGPTGGQEPPPARVRRAPPASPHPR) is disordered.

The protein belongs to the NhaA Na(+)/H(+) (TC 2.A.33) antiporter family.

It localises to the cell membrane. It carries out the reaction Na(+)(in) + 2 H(+)(out) = Na(+)(out) + 2 H(+)(in). Na(+)/H(+) antiporter that extrudes sodium in exchange for external protons. This chain is Na(+)/H(+) antiporter NhaA 2, found in Frankia alni (strain DSM 45986 / CECT 9034 / ACN14a).